We begin with the raw amino-acid sequence, 555 residues long: Glutamate--tRNA ligase (555 aa).

The 'HIGH' region motif lies at proline 100–histidine 110.

Belongs to the class-I aminoacyl-tRNA synthetase family. Glutamate--tRNA ligase type 2 subfamily.

It localises to the cytoplasm. The enzyme catalyses tRNA(Glu) + L-glutamate + ATP = L-glutamyl-tRNA(Glu) + AMP + diphosphate. Catalyzes the attachment of glutamate to tRNA(Glu) in a two-step reaction: glutamate is first activated by ATP to form Glu-AMP and then transferred to the acceptor end of tRNA(Glu). The polypeptide is Glutamate--tRNA ligase (Methanococcus maripaludis (strain C5 / ATCC BAA-1333)).